A 601-amino-acid chain; its full sequence is Elongation factor 4 (601 aa).

Positions E5–K187 constitute a tr-type G domain. Residues D17–T22 and N134–D137 each bind GTP.

It belongs to the TRAFAC class translation factor GTPase superfamily. Classic translation factor GTPase family. LepA subfamily.

Its subcellular location is the cell inner membrane. The enzyme catalyses GTP + H2O = GDP + phosphate + H(+). Required for accurate and efficient protein synthesis under certain stress conditions. May act as a fidelity factor of the translation reaction, by catalyzing a one-codon backward translocation of tRNAs on improperly translocated ribosomes. Back-translocation proceeds from a post-translocation (POST) complex to a pre-translocation (PRE) complex, thus giving elongation factor G a second chance to translocate the tRNAs correctly. Binds to ribosomes in a GTP-dependent manner. This Treponema denticola (strain ATCC 35405 / DSM 14222 / CIP 103919 / JCM 8153 / KCTC 15104) protein is Elongation factor 4.